Reading from the N-terminus, the 220-residue chain is LHFPL tetraspan subfamily member 1 protein (220 aa).

Residues 1–20 form the signal peptide; it reads MRSSLTMVGTLWAFLSLVTA. 2 helical membrane passes run 86–106 and 122–142; these read VVTG…VLGC and AAQF…PLGW. Asn-153 carries N-linked (GlcNAc...) asparagine glycosylation. A helical membrane pass occupies residues 165–185; it reads LGWAYYCAGGGAAAAMLICTW.

This sequence belongs to the LHFP family. In terms of tissue distribution, widely expressed. Expressed at high levels in lung, thymus, skeletal muscle, colon and ovary.

The protein resides in the membrane. The sequence is that of LHFPL tetraspan subfamily member 1 protein from Homo sapiens (Human).